The sequence spans 296 residues: GTP-binding protein GEM (296 aa).

Disordered stretches follow at residues 1–20 and 37–68; these read MTLN…PQQQ and PHQY…SVIS. The segment covering 57 to 68 has biased composition (low complexity); the sequence is SWSSDSTDSVIS. GTP-binding positions include 82–89 and 191–194; these read GEQGVGKS and NKSD. A calmodulin-binding region spans residues 266-285; the sequence is ARRFWGKIVAKNNKNMAFKL.

It belongs to the small GTPase superfamily. RGK family. Interacts with calmodulin in a Ca(2+)-dependent manner. Binds ROCK1. Phosphorylated on tyrosine residues.

It localises to the cell membrane. In terms of biological role, could be a regulatory protein, possibly participating in receptor-mediated signal transduction at the plasma membrane. Has guanine nucleotide-binding activity but undetectable intrinsic GTPase activity. This Pongo abelii (Sumatran orangutan) protein is GTP-binding protein GEM (GEM).